Reading from the N-terminus, the 215-residue chain is 3-isopropylmalate dehydratase small subunit (215 aa).

This sequence belongs to the LeuD family. LeuD type 1 subfamily. Heterodimer of LeuC and LeuD.

It catalyses the reaction (2R,3S)-3-isopropylmalate = (2S)-2-isopropylmalate. The protein operates within amino-acid biosynthesis; L-leucine biosynthesis; L-leucine from 3-methyl-2-oxobutanoate: step 2/4. Its function is as follows. Catalyzes the isomerization between 2-isopropylmalate and 3-isopropylmalate, via the formation of 2-isopropylmaleate. The chain is 3-isopropylmalate dehydratase small subunit from Polynucleobacter necessarius subsp. necessarius (strain STIR1).